A 541-amino-acid chain; its full sequence is MSFSPPNKSADATIQITEMTRQGTPSSGEAAASTPSTSSTESGDKALEALGYTPVFKREFSRWSSFSFAMSISGVYGTLMSTWIYGLQAGGAAAIMWSWIIGGAGGWALAYSIAEIASAYPSSGAMYFTLKFLAPEEQVPFLCWIAGYLNLVGTVAGGASTEYAASQMLLAAVSITSNFSYVPTPTHVVGVMIGLTTIHAMINTLPTAWLNRLTSGYVVFHISVLLGACVTLLVQKRHDMHDLKYAFTNFQPSSGWSPPGFAFLFGCLTPAWIMTGCDGTARIAEEAKNPQMVVPRAIANATTFTYVIGFFFNLVLVVCMGDPKDLINSPSGQPVAQLFFNGMGRAPAIFFTLCGFGVMNLVAIPGIQAGSRTIFALSRDNLLPFSHIWVRISKRSQTPLIAVWTYAVLEIIINLLGLASSTAIGAVFNVCTVALNVSYVIPIICKMVYGRMQKGPWHMGKYSVWVNAFAVAWNTFMAVIFFFPTRLPVTPENMNYAIVVFFFVLIFALVFWYTHGRHYYTGPLTHSPRATDMSVRTPVGV.

Residues 1-22 show a composition bias toward polar residues; it reads MSFSPPNKSADATIQITEMTRQ. The segment at 1 to 43 is disordered; it reads MSFSPPNKSADATIQITEMTRQGTPSSGEAAASTPSTSSTESG. Low complexity predominate over residues 23 to 41; sequence GTPSSGEAAASTPSTSSTE. The next 12 membrane-spanning stretches (helical) occupy residues 66 to 86, 90 to 110, 139 to 159, 188 to 208, 214 to 234, 255 to 275, 301 to 321, 347 to 367, 399 to 419, 424 to 444, 464 to 484, and 496 to 516; these read FSFA…WIYG, GGAA…WALA, VPFL…AGGA, VVGV…LPTA, TSGY…TLLV, GWSP…WIMT, ATTF…VCMG, PAIF…IPGI, PLIA…LGLA, IGAV…IPII, VWVN…FFFP, and YAIV…YTHG.

It belongs to the amino acid-polyamine-organocation (APC) superfamily.

The protein localises to the membrane. The polypeptide is Amino-acid permease 2 (aap-2) (Neurospora crassa (strain ATCC 24698 / 74-OR23-1A / CBS 708.71 / DSM 1257 / FGSC 987)).